Reading from the N-terminus, the 482-residue chain is Ribosomal protein S6 kinase beta-2 (482 aa).

The segment at 1–26 is disordered; it reads MAAVFDLDLETEEGSEGEGEPELSPA. The segment covering 7 to 21 has biased composition (acidic residues); sequence LDLETEEGSEGEGEP. S15 is subject to Phosphoserine. Positions 67-328 constitute a Protein kinase domain; sequence FELLRVLGKG…AADVQRHPFF (262 aa). ATP is bound by residues 73-81 and K99; that span reads LGKGGYGKV. The Proton acceptor role is filled by D194. In terms of domain architecture, AGC-kinase C-terminal spans 329–399; that stretch reads RHMNWDDLLA…VAPSVLDSIK (71 aa). A disordered region spans residues 407–482; sequence KLRSPRRLNS…SKRGRGRPGR (76 aa). S417 and S423 each carry phosphoserine. A compositionally biased stretch (pro residues) spans 437–466; sequence PSLPEPTELPLPPLLPPPPPSTTAPLPIRP. A Nuclear localization signal motif is present at residues 471-477; sequence KKSKRGR. A compositionally biased stretch (basic residues) spans 471-482; that stretch reads KKSKRGRGRPGR. S473 carries the post-translational modification Phosphoserine; by PKC.

Belongs to the protein kinase superfamily. AGC Ser/Thr protein kinase family. S6 kinase subfamily. Phosphorylated and activated by MTOR. Phosphorylation by PKC within the NLS in response to mitogenic stimuli causes cytoplasmic retention.

The protein localises to the cytoplasm. The protein resides in the nucleus. The enzyme catalyses L-seryl-[protein] + ATP = O-phospho-L-seryl-[protein] + ADP + H(+). The catalysed reaction is L-threonyl-[protein] + ATP = O-phospho-L-threonyl-[protein] + ADP + H(+). Phosphorylates specifically ribosomal protein S6. Seems to act downstream of mTOR signaling in response to growth factors and nutrients to promote cell proliferation, cell growth and cell cycle progression in an alternative pathway regulated by MEAK7. This Homo sapiens (Human) protein is Ribosomal protein S6 kinase beta-2 (RPS6KB2).